The following is a 943-amino-acid chain: Isoleucine--tRNA ligase (943 aa).

The 'HIGH' region motif lies at 58-68 (PYANGTIHIGH). Glutamate 567 contacts L-isoleucyl-5'-AMP. The 'KMSKS' region signature appears at 608-612 (KMSKS). Lysine 611 serves as a coordination point for ATP. Zn(2+)-binding residues include cysteine 906, cysteine 909, cysteine 926, and cysteine 929.

Belongs to the class-I aminoacyl-tRNA synthetase family. IleS type 1 subfamily. In terms of assembly, monomer. Requires Zn(2+) as cofactor.

It localises to the cytoplasm. The enzyme catalyses tRNA(Ile) + L-isoleucine + ATP = L-isoleucyl-tRNA(Ile) + AMP + diphosphate. Catalyzes the attachment of isoleucine to tRNA(Ile). As IleRS can inadvertently accommodate and process structurally similar amino acids such as valine, to avoid such errors it has two additional distinct tRNA(Ile)-dependent editing activities. One activity is designated as 'pretransfer' editing and involves the hydrolysis of activated Val-AMP. The other activity is designated 'posttransfer' editing and involves deacylation of mischarged Val-tRNA(Ile). The polypeptide is Isoleucine--tRNA ligase (Pseudomonas fluorescens (strain Pf0-1)).